A 285-amino-acid polypeptide reads, in one-letter code: Diaminopimelate epimerase (285 aa).

Positions 15 and 68 each coordinate substrate. C77 functions as the Proton donor in the catalytic mechanism. Substrate contacts are provided by residues 78–79 (GN), N165, N201, and 219–220 (ER). Residue C228 is the Proton acceptor of the active site. 229–230 (GT) lines the substrate pocket.

It belongs to the diaminopimelate epimerase family. As to quaternary structure, homodimer.

It is found in the cytoplasm. It carries out the reaction (2S,6S)-2,6-diaminopimelate = meso-2,6-diaminopimelate. The protein operates within amino-acid biosynthesis; L-lysine biosynthesis via DAP pathway; DL-2,6-diaminopimelate from LL-2,6-diaminopimelate: step 1/1. Catalyzes the stereoinversion of LL-2,6-diaminopimelate (L,L-DAP) to meso-diaminopimelate (meso-DAP), a precursor of L-lysine and an essential component of the bacterial peptidoglycan. This chain is Diaminopimelate epimerase, found in Synechococcus sp. (strain JA-3-3Ab) (Cyanobacteria bacterium Yellowstone A-Prime).